Reading from the N-terminus, the 568-residue chain is 2-succinyl-5-enolpyruvyl-6-hydroxy-3-cyclohexene-1-carboxylate synthase (568 aa).

This sequence belongs to the TPP enzyme family. MenD subfamily. In terms of assembly, homodimer. The cofactor is Mg(2+). Mn(2+) serves as cofactor. It depends on thiamine diphosphate as a cofactor.

It carries out the reaction isochorismate + 2-oxoglutarate + H(+) = 5-enolpyruvoyl-6-hydroxy-2-succinyl-cyclohex-3-ene-1-carboxylate + CO2. The protein operates within quinol/quinone metabolism; 1,4-dihydroxy-2-naphthoate biosynthesis; 1,4-dihydroxy-2-naphthoate from chorismate: step 2/7. Its pathway is quinol/quinone metabolism; menaquinone biosynthesis. Its function is as follows. Catalyzes the thiamine diphosphate-dependent decarboxylation of 2-oxoglutarate and the subsequent addition of the resulting succinic semialdehyde-thiamine pyrophosphate anion to isochorismate to yield 2-succinyl-5-enolpyruvyl-6-hydroxy-3-cyclohexene-1-carboxylate (SEPHCHC). This Pasteurella multocida (strain Pm70) protein is 2-succinyl-5-enolpyruvyl-6-hydroxy-3-cyclohexene-1-carboxylate synthase.